A 775-amino-acid chain; its full sequence is Subtilisin-like protease SBT3.8 (775 aa).

A signal peptide spans 1-26; sequence MKSCRTLIFVAIILNGLSTFVAHAGA. Positions 27 to 109 are cleaved as a propeptide — activation peptide; the sequence is ESKVHIVYLG…VTPDSFYQLD (83 aa). The Inhibitor I9 domain maps to 30 to 108; that stretch reads VHIVYLGEKQ…HVTPDSFYQL (79 aa). One can recognise a Peptidase S8 domain in the interval 113–622; that stretch reads TWDYLGLSVA…GGLVNPEKAA (510 aa). An N-linked (GlcNAc...) asparagine glycan is attached at asparagine 129. The Charge relay system role is filled by aspartate 143. N-linked (GlcNAc...) asparagine glycans are attached at residues asparagine 174 and asparagine 202. Histidine 218 acts as the Charge relay system in catalysis. The region spanning 384–476 is the PA domain; it reads SLVYPENPGN…VDYELGTDIL (93 aa). Asparagine 395, asparagine 410, and asparagine 538 each carry an N-linked (GlcNAc...) asparagine glycan. Residue serine 553 is the Charge relay system of the active site. Asparagine 645, asparagine 721, and asparagine 756 each carry an N-linked (GlcNAc...) asparagine glycan.

The protein belongs to the peptidase S8 family.

The protein localises to the secreted. In Arabidopsis thaliana (Mouse-ear cress), this protein is Subtilisin-like protease SBT3.8.